The sequence spans 467 residues: Asparagine--tRNA ligase (467 aa).

It belongs to the class-II aminoacyl-tRNA synthetase family. In terms of assembly, homodimer.

It is found in the cytoplasm. It catalyses the reaction tRNA(Asn) + L-asparagine + ATP = L-asparaginyl-tRNA(Asn) + AMP + diphosphate + H(+). This Bacteroides fragilis (strain ATCC 25285 / DSM 2151 / CCUG 4856 / JCM 11019 / LMG 10263 / NCTC 9343 / Onslow / VPI 2553 / EN-2) protein is Asparagine--tRNA ligase.